Reading from the N-terminus, the 598-residue chain is Probable translation initiation factor IF-2 (598 aa).

The tr-type G domain maps to 8-226 (IRQPIISVLG…VTGLAQRFLE (219 aa)). The segment at 17 to 24 (GHVDHGKT) is G1. Position 17–24 (17–24 (GHVDHGKT)) interacts with GTP. The tract at residues 42–46 (GITQH) is G2. The tract at residues 81–84 (DTPG) is G3. GTP contacts are provided by residues 81 to 85 (DTPGH) and 135 to 138 (NKVD). The interval 135-138 (NKVD) is G4. The tract at residues 203-205 (SGV) is G5.

The protein belongs to the TRAFAC class translation factor GTPase superfamily. Classic translation factor GTPase family. IF-2 subfamily.

In terms of biological role, function in general translation initiation by promoting the binding of the formylmethionine-tRNA to ribosomes. Seems to function along with eIF-2. This Methanopyrus kandleri (strain AV19 / DSM 6324 / JCM 9639 / NBRC 100938) protein is Probable translation initiation factor IF-2.